Consider the following 736-residue polypeptide: Phosphoribosylformylglycinamidine synthase subunit PurL (736 aa).

The active site involves His-49. Residues Tyr-52 and Lys-91 each coordinate ATP. Mg(2+) is bound at residue Glu-93. Substrate contacts are provided by residues 94–97 (SHNH) and Arg-116. His-95 serves as the catalytic Proton acceptor. A Mg(2+)-binding site is contributed by Asp-117. Residue Gln-240 participates in substrate binding. Asp-268 contributes to the Mg(2+) binding site. 312-314 (ESQ) is a substrate binding site. Positions 493 and 530 each coordinate ATP. Residue Asn-531 participates in Mg(2+) binding. Ser-533 serves as a coordination point for substrate.

This sequence belongs to the FGAMS family. As to quaternary structure, monomer. Part of the FGAM synthase complex composed of 1 PurL, 1 PurQ and 2 PurS subunits.

Its subcellular location is the cytoplasm. It carries out the reaction N(2)-formyl-N(1)-(5-phospho-beta-D-ribosyl)glycinamide + L-glutamine + ATP + H2O = 2-formamido-N(1)-(5-O-phospho-beta-D-ribosyl)acetamidine + L-glutamate + ADP + phosphate + H(+). It functions in the pathway purine metabolism; IMP biosynthesis via de novo pathway; 5-amino-1-(5-phospho-D-ribosyl)imidazole from N(2)-formyl-N(1)-(5-phospho-D-ribosyl)glycinamide: step 1/2. In terms of biological role, part of the phosphoribosylformylglycinamidine synthase complex involved in the purines biosynthetic pathway. Catalyzes the ATP-dependent conversion of formylglycinamide ribonucleotide (FGAR) and glutamine to yield formylglycinamidine ribonucleotide (FGAM) and glutamate. The FGAM synthase complex is composed of three subunits. PurQ produces an ammonia molecule by converting glutamine to glutamate. PurL transfers the ammonia molecule to FGAR to form FGAM in an ATP-dependent manner. PurS interacts with PurQ and PurL and is thought to assist in the transfer of the ammonia molecule from PurQ to PurL. This Rhodopseudomonas palustris (strain BisB18) protein is Phosphoribosylformylglycinamidine synthase subunit PurL.